The sequence spans 188 residues: NADH-quinone oxidoreductase subunit I 2 (188 aa).

4Fe-4S ferredoxin-type domains lie at 56–88 (HFLK…VVPY) and 98–127 (AKFE…LGQQ). 8 residues coordinate [4Fe-4S] cluster: Cys68, Cys71, Cys74, Cys78, Cys107, Cys110, Cys113, and Cys117.

The protein belongs to the complex I 23 kDa subunit family. As to quaternary structure, NDH-1 is composed of 14 different subunits. Subunits NuoA, H, J, K, L, M, N constitute the membrane sector of the complex. [4Fe-4S] cluster is required as a cofactor.

The protein localises to the cell inner membrane. The catalysed reaction is a quinone + NADH + 5 H(+)(in) = a quinol + NAD(+) + 4 H(+)(out). In terms of biological role, NDH-1 shuttles electrons from NADH, via FMN and iron-sulfur (Fe-S) centers, to quinones in the respiratory chain. The immediate electron acceptor for the enzyme in this species is believed to be ubiquinone. Couples the redox reaction to proton translocation (for every two electrons transferred, four hydrogen ions are translocated across the cytoplasmic membrane), and thus conserves the redox energy in a proton gradient. In Rhizobium etli (strain ATCC 51251 / DSM 11541 / JCM 21823 / NBRC 15573 / CFN 42), this protein is NADH-quinone oxidoreductase subunit I 2.